The primary structure comprises 505 residues: ATP synthase subunit alpha (505 aa).

170–177 is an ATP binding site; sequence GDRQTGKT.

The protein belongs to the ATPase alpha/beta chains family. In terms of assembly, F-type ATPases have 2 components, CF(1) - the catalytic core - and CF(0) - the membrane proton channel. CF(1) has five subunits: alpha(3), beta(3), gamma(1), delta(1), epsilon(1). CF(0) has four main subunits: a(1), b(1), b'(1) and c(9-12).

It is found in the cellular thylakoid membrane. It carries out the reaction ATP + H2O + 4 H(+)(in) = ADP + phosphate + 5 H(+)(out). Produces ATP from ADP in the presence of a proton gradient across the membrane. The alpha chain is a regulatory subunit. In Synechococcus sp. (strain ATCC 27144 / PCC 6301 / SAUG 1402/1) (Anacystis nidulans), this protein is ATP synthase subunit alpha.